The primary structure comprises 218 residues: MQADLSNIIALYGGSFDPLHYAHMEIIRLLRENLLYKRIILMPNYRNPLKSSSFFTPLQRLQMCKILADEMNNAKSCNQKIPYISVSDYEVCQNRSVFSVQSVAFIKEQITKQDTNAQLVFVLGEDSFNNLKQWKDVEKLCKMVDFVLIKREISQKDSQISPHIVPYAHVIKCLDLPPSVAHFSSSSVRSLLQKGQIDEALNLVPVCLHTFIKANFRL.

The protein belongs to the NadD family.

The enzyme catalyses nicotinate beta-D-ribonucleotide + ATP + H(+) = deamido-NAD(+) + diphosphate. It functions in the pathway cofactor biosynthesis; NAD(+) biosynthesis; deamido-NAD(+) from nicotinate D-ribonucleotide: step 1/1. Its function is as follows. Catalyzes the reversible adenylation of nicotinate mononucleotide (NaMN) to nicotinic acid adenine dinucleotide (NaAD). The sequence is that of Probable nicotinate-nucleotide adenylyltransferase from Helicobacter hepaticus (strain ATCC 51449 / 3B1).